Consider the following 150-residue polypeptide: 3-dehydroquinate dehydratase (150 aa).

Residue Tyr25 is the Proton acceptor of the active site. Residues Asn76, His82, and Asp89 each contribute to the substrate site. His102 acts as the Proton donor in catalysis. Substrate is bound by residues 103-104 (LS) and Arg113.

It belongs to the type-II 3-dehydroquinase family. As to quaternary structure, homododecamer.

The enzyme catalyses 3-dehydroquinate = 3-dehydroshikimate + H2O. The protein operates within metabolic intermediate biosynthesis; chorismate biosynthesis; chorismate from D-erythrose 4-phosphate and phosphoenolpyruvate: step 3/7. Its function is as follows. Catalyzes a trans-dehydration via an enolate intermediate. The chain is 3-dehydroquinate dehydratase from Trichodesmium erythraeum (strain IMS101).